The sequence spans 1013 residues: Sodium/potassium-transporting ATPase subunit alpha-3 (1013 aa).

Over residues 1–10 (MGDKKDDKSS) the composition is skewed to basic and acidic residues. A disordered region spans residues 1 to 24 (MGDKKDDKSSPKKSKAKERRDLDD). The Cytoplasmic portion of the chain corresponds to 1-77 (MGDKKDDKSS…NALTPPPTTP (77 aa)). 2 positions are modified to phosphoserine: serine 37 and serine 56. An interaction with phosphoinositide-3 kinase region spans residues 72-74 (PPP). Residues 78 to 98 (EWVKFCRQLFGGFSILLWIGA) form a helical membrane-spanning segment. Over 99–121 (ILCFLAYGIQAGTEDDPSGDNLY) the chain is Extracellular. Residues 122–142 (LGIVLAAVVIITGCFSYYQEA) traverse the membrane as a helical segment. Residues 143–278 (KSSKIMESFK…VGKTPIAIEI (136 aa)) lie on the Cytoplasmic side of the membrane. Serine 218 and serine 265 each carry phosphoserine. The helical transmembrane segment at 279-298 (EHFIQLITGVAVFLGVSFFI) threads the bilayer. Over 299-310 (LSLILGYTWLEA) the chain is Extracellular. Residues 311–328 (VIFLIGIIVANVPEGLLA) traverse the membrane as a helical segment. The Cytoplasmic segment spans residues 329-762 (TVTVCLTLTA…EEGRLIFDNL (434 aa)). Aspartate 366 (4-aspartylphosphate intermediate) is an active-site residue. Serine 442 is modified (phosphoserine). Phosphotyrosine is present on tyrosine 548. The Mg(2+) site is built by aspartate 707 and aspartate 711. A helical transmembrane segment spans residues 763–782 (KKSIAYTLTSNIPEITPFLL). The Extracellular segment spans residues 783 to 792 (FIMANIPLPL). Residues 793–813 (GTITILCIDLGTDMVPAISLA) traverse the membrane as a helical segment. The Cytoplasmic segment spans residues 814–833 (YEAAESDIMKRQPRNPRTDK). A helical membrane pass occupies residues 834-856 (LVNERLISMAYGQIGMIQALGGF). The Extracellular segment spans residues 857–908 (FSYFVILAENGFLPGNLVGIRLNWDDRTVNDLEDSYGQQWTYEQRKVVEFTC). A helical membrane pass occupies residues 909–928 (HTAFFVSIVVVQWADLIICK). Residues 929 to 941 (TRRNSVFQQGMKN) lie on the Cytoplasmic side of the membrane. Residue serine 933 is modified to Phosphoserine; by PKA. The helical transmembrane segment at 942 to 960 (KILIFGLFEETALAAFLSY) threads the bilayer. The Extracellular portion of the chain corresponds to 961-975 (CPGMDVALRMYPLKP). A helical transmembrane segment spans residues 976-996 (SWWFCAFPYSFLIFVYDEIRK). The Cytoplasmic portion of the chain corresponds to 997–1013 (LILRRNPGGWVEKETYY).

This sequence belongs to the cation transport ATPase (P-type) (TC 3.A.3) family. Type IIC subfamily. In terms of assembly, the sodium/potassium-transporting ATPase is composed of a catalytic alpha subunit, an auxiliary non-catalytic beta subunit and an additional regulatory subunit. Interacts with regulatory subunit FXYD1.

It is found in the cell membrane. It catalyses the reaction K(+)(out) + Na(+)(in) + ATP + H2O = K(+)(in) + Na(+)(out) + ADP + phosphate + H(+). Its function is as follows. This is the catalytic component of the active enzyme, which catalyzes the hydrolysis of ATP coupled with the exchange of sodium and potassium ions across the plasma membrane. This action creates the electrochemical gradient of sodium and potassium ions, providing the energy for active transport of various nutrients. This Mus musculus (Mouse) protein is Sodium/potassium-transporting ATPase subunit alpha-3 (Atp1a3).